The primary structure comprises 67 residues: KEGYLVNHSTGCKYECFKLGDNDYCLRECRQGYGKGAGGYCYAFGCWCTHLYEQAVVWPLPKKTCNA.

The region spanning 1–66 (KEGYLVNHST…VWPLPKKTCN (66 aa)) is the LCN-type CS-alpha/beta domain. 4 cysteine pairs are disulfide-bonded: Cys-12-Cys-65, Cys-16-Cys-41, Cys-25-Cys-46, and Cys-29-Cys-48.

The protein belongs to the long (4 C-C) scorpion toxin superfamily. Sodium channel inhibitor family. Beta subfamily. As to expression, expressed by the venom gland.

The protein localises to the secreted. Functionally, beta toxins bind at site-4 of sodium channels and shift the voltage of activation toward more negative potentials thereby affecting sodium channel activation and promoting spontaneous and repetitive firing. This toxin is active against mammals and lethal to mice. Selectively modulates Nav1.4/SCN4A, a sodium channel present in both denervated and innervated skeletal muscle. This chain is Beta-mammal toxin CeII9, found in Centruroides elegans (Bark scorpion).